A 116-amino-acid polypeptide reads, in one-letter code: Cysteine proteinase inhibitor 1 (116 aa).

An N-terminal signal peptide occupies residues 1–22; that stretch reads MVPKPLSLLLLLLLALSAAVVG. Positions 30 to 89 constitute a Cystatin domain; the sequence is GGWRPIENLNSAEVQDVAQFAVSEHNKQANDELQYQSVVRGYTQVVAGTNYRLVIAAKDG. A Secondary area of contact motif is present at residues 73-77; the sequence is QVVAG. Asparagine 109 is a glycosylation site (N-linked (GlcNAc...) asparagine).

The protein belongs to the cystatin family. Phytocystatin subfamily.

It is found in the secreted. In terms of biological role, specific inhibitor of papain family cysteine proteinases. The chain is Cysteine proteinase inhibitor 1 from Actinidia chinensis var. chinensis (Chinese soft-hair kiwi).